A 431-amino-acid chain; its full sequence is Glutamate-1-semialdehyde 2,1-aminomutase (431 aa).

Position 265 is an N6-(pyridoxal phosphate)lysine (Lys-265).

The protein belongs to the class-III pyridoxal-phosphate-dependent aminotransferase family. HemL subfamily. Homodimer. Pyridoxal 5'-phosphate serves as cofactor.

The protein resides in the cytoplasm. The catalysed reaction is (S)-4-amino-5-oxopentanoate = 5-aminolevulinate. Its pathway is porphyrin-containing compound metabolism; protoporphyrin-IX biosynthesis; 5-aminolevulinate from L-glutamyl-tRNA(Glu): step 2/2. This chain is Glutamate-1-semialdehyde 2,1-aminomutase, found in Vibrio vulnificus (strain YJ016).